Here is an 830-residue protein sequence, read N- to C-terminus: ATP-dependent DNA helicase chl-1 (830 aa).

A Helicase ATP-binding domain is found at Met1–Glu403. Position 35-42 (Ser35–Ser42) interacts with ATP. Composition is skewed to basic and acidic residues over residues Gly124–Asp140 and Asn157–Asp168. The tract at residues Gly124–Val173 is disordered. Residues Cys222, Cys240, Cys272, and Cys308 each contribute to the [4Fe-4S] cluster site. Positions Asp351 to His354 match the DEAH box motif.

It belongs to the DEAD box helicase family. DEAH subfamily. DDX11/CHL1 sub-subfamily. It depends on [4Fe-4S] cluster as a cofactor.

The protein resides in the nucleus. The catalysed reaction is Couples ATP hydrolysis with the unwinding of duplex DNA at the replication fork by translocating in the 5'-3' direction. This creates two antiparallel DNA single strands (ssDNA). The leading ssDNA polymer is the template for DNA polymerase III holoenzyme which synthesizes a continuous strand.. The enzyme catalyses ATP + H2O = ADP + phosphate + H(+). Its function is as follows. Required for normal cell proliferation and chromosome stability. Plays a role in DNA repair during replication. This chain is ATP-dependent DNA helicase chl-1, found in Caenorhabditis elegans.